The primary structure comprises 92 residues: UPF0223 protein SZO_10560 (92 aa).

The protein belongs to the UPF0223 family.

In Streptococcus equi subsp. zooepidemicus (strain H70), this protein is UPF0223 protein SZO_10560.